Consider the following 635-residue polypeptide: Extracellular metalloproteinase 1 (635 aa).

An N-terminal signal peptide occupies residues 1–19 (MHGLLLAAGLLSLPLHVLA). Residues 20 to 246 (HPQPSTSTSL…VHNVVDYVAH (227 aa)) constitute a propeptide that is removed on maturation. Residue Asn287 is glycosylated (N-linked (GlcNAc...) asparagine). Residue His430 coordinates Zn(2+). Glu431 is an active-site residue. His434 contacts Zn(2+). N-linked (GlcNAc...) asparagine glycosylation is found at Asn475, Asn594, and Asn623.

Belongs to the peptidase M36 family. It depends on Zn(2+) as a cofactor.

It localises to the secreted. Its function is as follows. Secreted metalloproteinase probably acting as a virulence factor. The sequence is that of Extracellular metalloproteinase 1 (MEP1) from Arthroderma benhamiae (Trichophyton mentagrophytes).